The following is a 127-amino-acid chain: Phosphoribosyl-AMP cyclohydrolase (127 aa).

D78 lines the Mg(2+) pocket. A Zn(2+)-binding site is contributed by C79. The Mg(2+) site is built by D80 and D82. Residues C95 and C102 each contribute to the Zn(2+) site.

This sequence belongs to the PRA-CH family. As to quaternary structure, homodimer. It depends on Mg(2+) as a cofactor. Requires Zn(2+) as cofactor.

The protein resides in the cytoplasm. The enzyme catalyses 1-(5-phospho-beta-D-ribosyl)-5'-AMP + H2O = 1-(5-phospho-beta-D-ribosyl)-5-[(5-phospho-beta-D-ribosylamino)methylideneamino]imidazole-4-carboxamide. Its pathway is amino-acid biosynthesis; L-histidine biosynthesis; L-histidine from 5-phospho-alpha-D-ribose 1-diphosphate: step 3/9. Catalyzes the hydrolysis of the adenine ring of phosphoribosyl-AMP. In Salinibacter ruber (strain DSM 13855 / M31), this protein is Phosphoribosyl-AMP cyclohydrolase.